A 498-amino-acid chain; its full sequence is MASQGTKRSYEQMETGGERQNATEIRASVGRMVGGIGRFYIQMCTELKLSDYEGRLIQNSITIERMVLSAFDERRNKYLEEHPSAGKDPKKTGGPIYRRRDGKWMRELILYDKEEIRRIWRQANNGEDATAGLTHLMIWHSNLNDATYQRTRALVRTGMDPRMCSLMQGSTLPRRSGAAGAAVKGVGTMVMELIRMIKRGINDRNFWRGENGRRTRIAYERMCNILKGKFQTAAQRAMMDQVRESRNPGNAEIEDLIFLARSALILRGSVAHKSCLPACVYGLSVASGYDFEREGYSLVGIDPFRLLQNSQVFSLIRPNENPAHKSQLVWMACHSAAFEDLRVSSFIRGARVVPRGQLSTRGVQIASNENMETMDSSTLELRSRYWAIRTRSGGNTNQQRASAGQISVQPTFSVQRNLPFERATIMAAFTGNTEGRTSDMRTEIIRMMENARPEDVSFQGRGVFELSDEKATNPIVPSFDMNNEGSYFFGDNAEEYNN.

The Unconventional nuclear localization signal motif lies at 1–18 (MASQGTKRSYEQMETGGE). Positions 1–21 (MASQGTKRSYEQMETGGERQN) are disordered. Residues 198–216 (KRGINDRNFWRGENGRRTR) carry the Bipartite nuclear localization signal motif.

Belongs to the influenza viruses nucleoprotein family. As to quaternary structure, homomultimerizes to form the nucleocapsid. May bind host exportin-1/XPO1. Binds to viral genomic RNA. Protein-RNA contacts are mediated by a combination of electrostatic interactions between positively charged residues and the phosphate backbone and planar interactions between aromatic side chains and bases. Late in virus-infected cells, may be cleaved from a 56-kDa protein to a 53-kDa protein by a cellular caspase. This cleavage might be a marker for the onset of apoptosis in infected cells or have a specific function in virus host interaction.

It is found in the virion. Its subcellular location is the host nucleus. Functionally, encapsidates the negative strand viral RNA, protecting it from nucleases. The encapsidated genomic RNA is termed the ribonucleoprotein (RNP) and serves as template for transcription and replication. The RNP needs to be localized in the host nucleus to start an infectious cycle, but is too large to diffuse through the nuclear pore complex. NP comprises at least 2 nuclear localization signals that are responsible for the active RNP import into the nucleus through cellular importin alpha/beta pathway. Later in the infection, nclear export of RNPs are mediated through viral proteins NEP interacting with M1 which binds nucleoproteins. It is possible that nucleoprotein binds directly host exportin-1/XPO1 and plays an active role in RNPs nuclear export. M1 interaction with RNP seems to hide nucleoprotein's nuclear localization signals. Soon after a virion infects a new cell, M1 dissociates from the RNP under acidification of the virion driven by M2 protein. Dissociation of M1 from RNP unmasks nucleoprotein's nuclear localization signals, targeting the RNP to the nucleus. This chain is Nucleoprotein, found in Influenza A virus (strain A/Seal/Massachusetts/1/1980 H7N7).